Consider the following 315-residue polypeptide: 31 kDa ribonucleoprotein, chloroplastic (315 aa).

A chloroplast-targeting transit peptide spans 1–71 (MSCATKPIIK…LSPKKKTSVS (71 aa)). A disordered region spans residues 114 to 133 (AGESDEVEADEEEEEFQEPP). Acidic residues predominate over residues 115-133 (GESDEVEADEEEEEFQEPP). RRM domains follow at residues 136-214 (AKLF…KAAR) and 230-308 (YRIY…VAED).

The protein localises to the plastid. Its subcellular location is the chloroplast. Functionally, could be involved in splicing and/or processing of chloroplast RNA's. This chain is 31 kDa ribonucleoprotein, chloroplastic, found in Nicotiana sylvestris (Wood tobacco).